Reading from the N-terminus, the 138-residue chain is Protein NrdI (138 aa).

This sequence belongs to the NrdI family.

Functionally, probably involved in ribonucleotide reductase function. The polypeptide is Protein NrdI (Mycobacterium leprae (strain TN)).